The primary structure comprises 66 residues: Ribosome biogenesis protein Nop10 (66 aa).

Belongs to the NOP10 family.

In terms of biological role, involved in ribosome biogenesis; more specifically in 18S rRNA pseudouridylation and in cleavage of pre-rRNA. This Desulfurococcus amylolyticus (strain DSM 18924 / JCM 16383 / VKM B-2413 / 1221n) (Desulfurococcus kamchatkensis) protein is Ribosome biogenesis protein Nop10.